The following is a 458-amino-acid chain: Probable plasmid replicative DNA helicase (458 aa).

Residues 194 to 458 (KIDYVDGLPT…GKFTIQKEAW (265 aa)) form the SF4 helicase domain. Residue 225–232 (ARPAMGKT) coordinates ATP.

This sequence belongs to the helicase family. DnaB subfamily. In terms of assembly, homohexamer.

It catalyses the reaction Couples ATP hydrolysis with the unwinding of duplex DNA at the replication fork by translocating in the 5'-3' direction. This creates two antiparallel DNA single strands (ssDNA). The leading ssDNA polymer is the template for DNA polymerase III holoenzyme which synthesizes a continuous strand.. The catalysed reaction is ATP + H2O = ADP + phosphate + H(+). Functionally, a replicative DNA helicase, it participates in initiation and elongation during DNA replication. Travels ahead of the DNA replisome, separating dsDNA into templates for DNA synthesis. A processive ATP-dependent 5'-3' DNA helicase it has DNA-dependent ATPase activity. The chain is Probable plasmid replicative DNA helicase from Chlamydia psittaci (Chlamydophila psittaci).